We begin with the raw amino-acid sequence, 425 residues long: Spermatogenesis- and oogenesis-specific basic helix-loop-helix-containing protein 2 (425 aa).

The bHLH domain occupies 201–252; it reads KISLLHSSKEKLRRERIKYCCEQLRTLLPYVKGRKNDAASVLEATVDYVKYI.

Forms both hetero- and homodimers with SOHLH1.

It is found in the nucleus. The protein resides in the cytoplasm. Functionally, transcription regulator of both male and female germline differentiation. Suppresses genes involved in spermatogonial stem cells maintenance, and induces genes important for spermatogonial differentiation. Coordinates oocyte differentiation without affecting meiosis I. In Homo sapiens (Human), this protein is Spermatogenesis- and oogenesis-specific basic helix-loop-helix-containing protein 2 (SOHLH2).